Consider the following 323-residue polypeptide: tRNA U34 carboxymethyltransferase (323 aa).

Carboxy-S-adenosyl-L-methionine is bound by residues Lys-91, Trp-105, Lys-110, Gly-130, 152–154 (DPT), 181–182 (IE), Met-196, Tyr-200, and Arg-315.

Belongs to the class I-like SAM-binding methyltransferase superfamily. CmoB family. Homotetramer.

The enzyme catalyses carboxy-S-adenosyl-L-methionine + 5-hydroxyuridine(34) in tRNA = 5-carboxymethoxyuridine(34) in tRNA + S-adenosyl-L-homocysteine + H(+). Functionally, catalyzes carboxymethyl transfer from carboxy-S-adenosyl-L-methionine (Cx-SAM) to 5-hydroxyuridine (ho5U) to form 5-carboxymethoxyuridine (cmo5U) at position 34 in tRNAs. In Shigella flexneri serotype 5b (strain 8401), this protein is tRNA U34 carboxymethyltransferase.